Reading from the N-terminus, the 108-residue chain is MALWILLPLLALLILWGPDPAQAFVNQHLCGSHLVEALYILVCGERGFFYTPMSRREVEDPQVGQVELGAGPGAGSEQTLALEVARQARIVQQCTSGICSLYQENYCN.

A signal peptide spans 1-23 (MALWILLPLLALLILWGPDPAQA). 2 cysteine pairs are disulfide-bonded: Cys30/Cys94 and Cys43/Cys107. Positions 57–88 (EVEDPQVGQVELGAGPGAGSEQTLALEVARQA) are cleaved as a propeptide — c peptide.

Belongs to the insulin family. In terms of assembly, heterodimer of a B chain and an A chain linked by two disulfide bonds.

It localises to the secreted. Its function is as follows. Insulin decreases blood glucose concentration. It increases cell permeability to monosaccharides, amino acids and fatty acids. It accelerates glycolysis, the pentose phosphate cycle, and glycogen synthesis in liver. This chain is Insulin (INS), found in Rodentia sp.